Consider the following 355-residue polypeptide: Mannonate dehydratase (355 aa).

This sequence belongs to the mannonate dehydratase family. The cofactor is Fe(2+). Mn(2+) serves as cofactor.

The catalysed reaction is D-mannonate = 2-dehydro-3-deoxy-D-gluconate + H2O. Its pathway is carbohydrate metabolism; pentose and glucuronate interconversion. Catalyzes the dehydration of D-mannonate. This Brachyspira hyodysenteriae (strain ATCC 49526 / WA1) protein is Mannonate dehydratase.